The primary structure comprises 630 residues: 1-deoxy-D-xylulose-5-phosphate synthase (630 aa).

Thiamine diphosphate-binding positions include His-74 and 115 to 117; that span reads GHA. Residue Asp-146 coordinates Mg(2+). Thiamine diphosphate-binding positions include 147 to 148, Asn-175, Phe-284, and Glu-364; that span reads AA. Asn-175 is a Mg(2+) binding site.

This sequence belongs to the transketolase family. DXPS subfamily. Homodimer. The cofactor is Mg(2+). Thiamine diphosphate is required as a cofactor.

The catalysed reaction is D-glyceraldehyde 3-phosphate + pyruvate + H(+) = 1-deoxy-D-xylulose 5-phosphate + CO2. It functions in the pathway metabolic intermediate biosynthesis; 1-deoxy-D-xylulose 5-phosphate biosynthesis; 1-deoxy-D-xylulose 5-phosphate from D-glyceraldehyde 3-phosphate and pyruvate: step 1/1. Catalyzes the acyloin condensation reaction between C atoms 2 and 3 of pyruvate and glyceraldehyde 3-phosphate to yield 1-deoxy-D-xylulose-5-phosphate (DXP). The chain is 1-deoxy-D-xylulose-5-phosphate synthase from Methylacidiphilum infernorum (isolate V4) (Methylokorus infernorum (strain V4)).